The sequence spans 93 residues: UPF0147 protein MM_1385 (93 aa).

It belongs to the UPF0147 family.

The protein is UPF0147 protein MM_1385 of Methanosarcina mazei (strain ATCC BAA-159 / DSM 3647 / Goe1 / Go1 / JCM 11833 / OCM 88) (Methanosarcina frisia).